We begin with the raw amino-acid sequence, 402 residues long: MKKLLKSALLFAATGSALSLQALPVGNPAEPSLLIDGTMWEGASGDPCDPCATWCDAISIRAGYYGDYVFDRVLKVDVNKTFSGMAATPTQATGNASNTNQPEANGRPNIAYGRHMQDAEWFSNAAFLALNIWDRFDIFCTLGASNGYFKASSAAFNLVGLIGFSAASSISTDLPMQLPNVGITQGVVEFYTDTSFSWSVGARGALWECGCATLGAEFQYAQSNPKIEMLNVTSSPAQFVIHKPRGYKGASSNFPLPITAGTTEATDTKSATIKYHEWQVGLALSYRLNMLVPYIGVNWSRATFDADTIRIAQPKLKSEILNITTWNPSLIGSTTALPNNSGKDVLSDVLQIASIQINKMKSRKACGVAVGATLIDADKWSITGEARLINERAAHMNAQFRF.

The signal sequence occupies residues 1–22; the sequence is MKKLLKSALLFAATGSALSLQA.

The protein belongs to the chlamydial porin (CP) (TC 1.B.2) family. As to quaternary structure, part of a disulfide cross-linked outer membrane complex (COMC) composed of the major outer membrane porin (MOMP), the small cysteine-rich protein (OmcA) and the large cysteine-rich periplasmic protein (OmcB).

Its subcellular location is the cell outer membrane. In terms of biological role, in elementary bodies (EBs, the infectious stage, which is able to survive outside the host cell) provides the structural integrity of the outer envelope through disulfide cross-links with the small cysteine-rich protein and the large cysteine-rich periplasmic protein. It has been described in publications as the Sarkosyl-insoluble COMC (Chlamydia outer membrane complex), and serves as the functional equivalent of peptidoglycan. It is present but some of the disulfide bonds are reduced in reticulate bodies (RBs). Functionally, permits diffusion of specific solutes through the outer membrane. The polypeptide is Major outer membrane porin (ompA) (Chlamydophila psittaci (strain ATCC VR-125 / 6BC) (Chlamydia psittaci)).